The primary structure comprises 879 residues: Alanine--tRNA ligase (879 aa).

Residues His-566, His-570, Cys-668, and His-672 each coordinate Zn(2+).

Belongs to the class-II aminoacyl-tRNA synthetase family. The cofactor is Zn(2+).

It localises to the cytoplasm. It carries out the reaction tRNA(Ala) + L-alanine + ATP = L-alanyl-tRNA(Ala) + AMP + diphosphate. Its function is as follows. Catalyzes the attachment of alanine to tRNA(Ala) in a two-step reaction: alanine is first activated by ATP to form Ala-AMP and then transferred to the acceptor end of tRNA(Ala). Also edits incorrectly charged Ser-tRNA(Ala) and Gly-tRNA(Ala) via its editing domain. The sequence is that of Alanine--tRNA ligase from Clostridium perfringens (strain ATCC 13124 / DSM 756 / JCM 1290 / NCIMB 6125 / NCTC 8237 / Type A).